Consider the following 298-residue polypeptide: GTPase Era (298 aa).

One can recognise an Era-type G domain in the interval 4 to 171 (KSGFVSIVGR…VEGIFELLPE (168 aa)). Residues 12–19 (GRPNVGKS) form a G1 region. Position 12 to 19 (12 to 19 (GRPNVGKS)) interacts with GTP. Positions 38-42 (QTTRN) are G2. The segment at 59 to 62 (DTPG) is G3. GTP contacts are provided by residues 59–63 (DTPGV) and 121–124 (NKID). The segment at 121 to 124 (NKID) is G4. The segment at 150 to 152 (ISA) is G5. In terms of domain architecture, KH type-2 spans 202-280 (TREEIPHSVA…YLDLWVKVKE (79 aa)).

The protein belongs to the TRAFAC class TrmE-Era-EngA-EngB-Septin-like GTPase superfamily. Era GTPase family. In terms of assembly, monomer.

The protein localises to the cytoplasm. It localises to the cell membrane. Its function is as follows. An essential GTPase that binds both GDP and GTP, with rapid nucleotide exchange. Plays a role in 16S rRNA processing and 30S ribosomal subunit biogenesis and possibly also in cell cycle regulation and energy metabolism. The sequence is that of GTPase Era from Carboxydothermus hydrogenoformans (strain ATCC BAA-161 / DSM 6008 / Z-2901).